Reading from the N-terminus, the 339-residue chain is Quinolinate synthase (339 aa).

2 residues coordinate iminosuccinate: His63 and Ser81. Cys126 is a binding site for [4Fe-4S] cluster. Iminosuccinate is bound by residues 152–154 (YVN) and Ser169. Cys211 lines the [4Fe-4S] cluster pocket. Iminosuccinate contacts are provided by residues 237–239 (HPE) and Thr254. Cys297 lines the [4Fe-4S] cluster pocket.

Belongs to the quinolinate synthase family. Type 2 subfamily. It depends on [4Fe-4S] cluster as a cofactor.

Its subcellular location is the cytoplasm. It carries out the reaction iminosuccinate + dihydroxyacetone phosphate = quinolinate + phosphate + 2 H2O + H(+). It participates in cofactor biosynthesis; NAD(+) biosynthesis; quinolinate from iminoaspartate: step 1/1. Catalyzes the condensation of iminoaspartate with dihydroxyacetone phosphate to form quinolinate. This chain is Quinolinate synthase, found in Xylella fastidiosa (strain 9a5c).